The following is a 200-amino-acid chain: GTP-binding protein rho2 (200 aa).

A GTP-binding site is contributed by 15–22 (GDGACGKT). The Effector region motif lies at 37–45 (YVPTVFENY). Residues 62 to 66 (DTAGQ) and 120 to 123 (MKAD) each bind GTP. A Cysteine methyl ester modification is found at Cys197. Cys197 carries S-geranylgeranyl cysteine lipidation. Positions 198–200 (IIS) are cleaved as a propeptide — removed in mature form.

The protein belongs to the small GTPase superfamily. Rho family. As to quaternary structure, interacts with pck2.

It is found in the cell membrane. In terms of biological role, involved in cell morphogenesis, the maintenance of growth direction, control of polarity and of cell wall integrity. Regulates the synthesis of alpha-D-glucan through activation of pck2. The sequence is that of GTP-binding protein rho2 (rho2) from Schizosaccharomyces pombe (strain 972 / ATCC 24843) (Fission yeast).